The following is a 246-amino-acid chain: Proteasome subunit alpha (246 aa).

This sequence belongs to the peptidase T1A family. The 20S proteasome core is composed of 14 alpha and 14 beta subunits that assemble into four stacked heptameric rings, resulting in a barrel-shaped structure. The two inner rings, each composed of seven catalytic beta subunits, are sandwiched by two outer rings, each composed of seven alpha subunits. The catalytic chamber with the active sites is on the inside of the barrel. Has a gated structure, the ends of the cylinder being occluded by the N-termini of the alpha-subunits. Is capped at one or both ends by the proteasome regulatory ATPase, PAN.

It localises to the cytoplasm. Its activity is regulated as follows. The formation of the proteasomal ATPase PAN-20S proteasome complex, via the docking of the C-termini of PAN into the intersubunit pockets in the alpha-rings, triggers opening of the gate for substrate entry. Interconversion between the open-gate and close-gate conformations leads to a dynamic regulation of the 20S proteasome proteolysis activity. Functionally, component of the proteasome core, a large protease complex with broad specificity involved in protein degradation. The sequence is that of Proteasome subunit alpha from Methanopyrus kandleri (strain AV19 / DSM 6324 / JCM 9639 / NBRC 100938).